Consider the following 493-residue polypeptide: Dynein regulatory complex subunit 2 (493 aa).

2 coiled-coil regions span residues 99-163 (DSVI…RKLI) and 253-280 (KDEKSSKEIETQMKKIQKLQETIGILKG).

Belongs to the DRC2 family. As to quaternary structure, component of the nexin-dynein regulatory complex (N-DRC). Interacts with DRC1.

It localises to the cytoplasm. The protein resides in the cytoskeleton. The protein localises to the flagellum basal body. It is found in the cell projection. Its subcellular location is the cilium. It localises to the flagellum. The protein resides in the flagellum axoneme. Its function is as follows. Component of the nexin-dynein regulatory complex (N-DRC), a key regulator of ciliary/flagellar motility which maintains the alignment and integrity of the distal axoneme and regulates microtubule sliding in motile axonemes. Plays a critical role in the assembly of N-DRC and also stabilizes the assembly of multiple inner dynein arms and radial spokes. Coassembles with DRC1 to form a central scaffold needed for assembly of the N-DRC and its attachment to the outer doublet microtubules. The chain is Dynein regulatory complex subunit 2 (Ccdc65) from Mus musculus (Mouse).